We begin with the raw amino-acid sequence, 153 residues long: UPF0756 membrane protein lmo1568 (153 aa).

4 helical membrane-spanning segments follow: residues 6 to 26, 54 to 74, 80 to 100, and 117 to 137; these read MLFLLLFLLLGLIAKNNSLII, WGVTIITVAILIPIATGQIGF, SFKSAAGWIGLGAGIAVSILA, and LVFGTILAVVLFRGIAAGPVI.

Belongs to the UPF0756 family.

The protein resides in the cell membrane. In Listeria monocytogenes serovar 1/2a (strain ATCC BAA-679 / EGD-e), this protein is UPF0756 membrane protein lmo1568.